Reading from the N-terminus, the 502-residue chain is Lysine--tRNA ligase (502 aa).

E399 and E406 together coordinate Mg(2+).

This sequence belongs to the class-II aminoacyl-tRNA synthetase family. As to quaternary structure, homodimer. Requires Mg(2+) as cofactor.

The protein resides in the cytoplasm. It catalyses the reaction tRNA(Lys) + L-lysine + ATP = L-lysyl-tRNA(Lys) + AMP + diphosphate. In Synechococcus sp. (strain RCC307), this protein is Lysine--tRNA ligase.